A 168-amino-acid polypeptide reads, in one-letter code: NADH-quinone oxidoreductase subunit I (168 aa).

4Fe-4S ferredoxin-type domains are found at residues 58-88 (LRRY…IEAG) and 99-128 (VRYD…EGPN). Residues cysteine 68, cysteine 71, cysteine 74, cysteine 78, cysteine 108, cysteine 111, cysteine 114, and cysteine 118 each contribute to the [4Fe-4S] cluster site.

Belongs to the complex I 23 kDa subunit family. NDH-1 is composed of 14 different subunits. Subunits NuoA, H, J, K, L, M, N constitute the membrane sector of the complex. [4Fe-4S] cluster serves as cofactor.

The protein localises to the cell inner membrane. The enzyme catalyses a quinone + NADH + 5 H(+)(in) = a quinol + NAD(+) + 4 H(+)(out). Its function is as follows. NDH-1 shuttles electrons from NADH, via FMN and iron-sulfur (Fe-S) centers, to quinones in the respiratory chain. The immediate electron acceptor for the enzyme in this species is believed to be ubiquinone. Couples the redox reaction to proton translocation (for every two electrons transferred, four hydrogen ions are translocated across the cytoplasmic membrane), and thus conserves the redox energy in a proton gradient. This Bradyrhizobium diazoefficiens (strain JCM 10833 / BCRC 13528 / IAM 13628 / NBRC 14792 / USDA 110) protein is NADH-quinone oxidoreductase subunit I.